A 262-amino-acid polypeptide reads, in one-letter code: NADP-dependent mannitol dehydrogenase (262 aa).

NADP(+) is bound by residues isoleucine 23, aspartate 69, asparagine 96, and arginine 129. Serine 149 (proton donor) is an active-site residue. NADP(+) is bound by residues tyrosine 169, lysine 173, valine 202, threonine 204, and glutamine 206. Residue tyrosine 169 is the Proton acceptor of the active site. Lysine 173 (lowers pKa of active site Tyr) is an active-site residue.

It belongs to the short-chain dehydrogenases/reductases (SDR) family. As to quaternary structure, homotetramer.

The enzyme catalyses D-mannitol + NADP(+) = D-fructose + NADPH + H(+). This Agaricus bisporus (White button mushroom) protein is NADP-dependent mannitol dehydrogenase (mtdH).